Here is a 196-residue protein sequence, read N- to C-terminus: Small ribosomal subunit protein uS4c (196 aa).

Residues 89-169 (MRLDNIIFRL…LPKHLTIDTV (81 aa)) form the S4 RNA-binding domain.

It belongs to the universal ribosomal protein uS4 family. As to quaternary structure, part of the 30S ribosomal subunit. Contacts protein S5. The interaction surface between S4 and S5 is involved in control of translational fidelity.

It is found in the plastid. Its subcellular location is the chloroplast. Its function is as follows. One of the primary rRNA binding proteins, it binds directly to 16S rRNA where it nucleates assembly of the body of the 30S subunit. In terms of biological role, with S5 and S12 plays an important role in translational accuracy. The chain is Small ribosomal subunit protein uS4c (rps4) from Stipellula capensis (Cape rice grass).